The following is a 130-amino-acid chain: 3-hydroxyisobutyrate dehydrogenase, mitochondrial (130 aa).

Residues threonine 1–lysine 17, leucine 25–proline 26, and asparagine 30 contribute to the NAD(+) site. The residue at position 43 (lysine 43) is an N6-acetyllysine. An N6-acetyllysine; alternate modification is found at lysine 47. Position 47 is an N6-succinyllysine; alternate (lysine 47). N6-succinyllysine is present on lysine 101.

This sequence belongs to the HIBADH-related family. 3-hydroxyisobutyrate dehydrogenase subfamily. Homodimer.

The protein resides in the mitochondrion. The enzyme catalyses 3-hydroxy-2-methylpropanoate + NAD(+) = 2-methyl-3-oxopropanoate + NADH + H(+). It functions in the pathway amino-acid degradation; L-valine degradation. This Mesocricetus auratus (Golden hamster) protein is 3-hydroxyisobutyrate dehydrogenase, mitochondrial.